The following is a 56-amino-acid chain: Hydrophobic protein LTI6A (56 aa).

2 helical membrane passes run 11-31 (IILAIILPPLGVFFKFGCGIE) and 34-54 (ICLLLTFFGYLPGIIYAVWVI).

Belongs to the UPF0057 (PMP3) family. As to expression, expressed in shoot of cold stressed seedlings.

It localises to the membrane. Functionally, plays a role in the regulation of membrane potential. Could mediate a proton leak. This chain is Hydrophobic protein LTI6A (LTI6A), found in Oryza sativa subsp. japonica (Rice).